We begin with the raw amino-acid sequence, 407 residues long: Imidazolonepropionase (407 aa).

Positions 68 and 70 each coordinate Fe(3+). Residues His68 and His70 each coordinate Zn(2+). Positions 77, 140, and 173 each coordinate 4-imidazolone-5-propanoate. Tyr140 serves as a coordination point for N-formimidoyl-L-glutamate. A Fe(3+)-binding site is contributed by His238. Residue His238 coordinates Zn(2+). Gln241 contributes to the 4-imidazolone-5-propanoate binding site. Asp313 provides a ligand contact to Fe(3+). A Zn(2+)-binding site is contributed by Asp313. Positions 315 and 317 each coordinate N-formimidoyl-L-glutamate. Thr318 contributes to the 4-imidazolone-5-propanoate binding site.

Belongs to the metallo-dependent hydrolases superfamily. HutI family. Zn(2+) serves as cofactor. It depends on Fe(3+) as a cofactor.

It is found in the cytoplasm. The catalysed reaction is 4-imidazolone-5-propanoate + H2O = N-formimidoyl-L-glutamate. It participates in amino-acid degradation; L-histidine degradation into L-glutamate; N-formimidoyl-L-glutamate from L-histidine: step 3/3. Its function is as follows. Catalyzes the hydrolytic cleavage of the carbon-nitrogen bond in imidazolone-5-propanoate to yield N-formimidoyl-L-glutamate. It is the third step in the universal histidine degradation pathway. This chain is Imidazolonepropionase, found in Burkholderia cenocepacia (strain ATCC BAA-245 / DSM 16553 / LMG 16656 / NCTC 13227 / J2315 / CF5610) (Burkholderia cepacia (strain J2315)).